The chain runs to 110 residues: UPF0122 protein GWCH70_1086 (110 aa).

The protein belongs to the UPF0122 family.

Its function is as follows. Might take part in the signal recognition particle (SRP) pathway. This is inferred from the conservation of its genetic proximity to ftsY/ffh. May be a regulatory protein. This is UPF0122 protein GWCH70_1086 from Geobacillus sp. (strain WCH70).